We begin with the raw amino-acid sequence, 209 residues long: Ribosomal RNA large subunit methyltransferase E (209 aa).

Residues G63, W65, D83, D99, and D124 each coordinate S-adenosyl-L-methionine. The active-site Proton acceptor is the K164.

It belongs to the class I-like SAM-binding methyltransferase superfamily. RNA methyltransferase RlmE family.

It is found in the cytoplasm. The enzyme catalyses uridine(2552) in 23S rRNA + S-adenosyl-L-methionine = 2'-O-methyluridine(2552) in 23S rRNA + S-adenosyl-L-homocysteine + H(+). Its function is as follows. Specifically methylates the uridine in position 2552 of 23S rRNA at the 2'-O position of the ribose in the fully assembled 50S ribosomal subunit. The polypeptide is Ribosomal RNA large subunit methyltransferase E (Buchnera aphidicola subsp. Cinara cedri (strain Cc)).